Consider the following 133-residue polypeptide: Ribosome-binding factor A (133 aa).

The protein belongs to the RbfA family. Monomer. Binds 30S ribosomal subunits, but not 50S ribosomal subunits or 70S ribosomes.

The protein localises to the cytoplasm. In terms of biological role, one of several proteins that assist in the late maturation steps of the functional core of the 30S ribosomal subunit. Associates with free 30S ribosomal subunits (but not with 30S subunits that are part of 70S ribosomes or polysomes). Required for efficient processing of 16S rRNA. May interact with the 5'-terminal helix region of 16S rRNA. In Trichormus variabilis (strain ATCC 29413 / PCC 7937) (Anabaena variabilis), this protein is Ribosome-binding factor A.